A 555-amino-acid chain; its full sequence is Efflux pump FUS6 (555 aa).

A disordered region spans residues 1–23 (MASAKDAQPAPEKSLSSDPQPEP). 5 helical membrane passes run 31–51 (WLIF…TSII), 67–87 (LYVW…PIFA), 97–117 (SLTL…GGAH), 130–150 (GIGG…MVSI), and 159–179 (IIGG…GAFA). The N-linked (GlcNAc...) asparagine glycan is linked to Asn181. 3 consecutive transmembrane segments (helical) span residues 186–206 (WIFY…GLFL), 225–245 (WGGS…LSWG), and 253–273 (GWQT…FFAY). Residue Asn291 is glycosylated (N-linked (GlcNAc...) asparagine). Transmembrane regions (helical) follow at residues 297–317 (LLVI…FLPV), 332–352 (VMLF…GITI), 360–380 (VWHF…TLLD), 393–413 (ILFG…ILAS), 425–445 (AWTF…AAVF), and 501–521 (KVVW…CFFV). The N-linked (GlcNAc...) asparagine glycan is linked to Asn545.

It belongs to the major facilitator superfamily. TCR/Tet family.

It is found in the membrane. Its function is as follows. Efflux pump; part of the gene cluster that mediates the biosynthesis of the mycotoxin fusarin C. Within the cluster, FUS1, FUS2, FUS8 and FUS9 are sufficient for fusarin production. The other FUS cluster members are not essential for fusarin C biosynthesis. In Gibberella fujikuroi (strain CBS 195.34 / IMI 58289 / NRRL A-6831) (Bakanae and foot rot disease fungus), this protein is Efflux pump FUS6.